The sequence spans 465 residues: Cysteine--tRNA ligase (465 aa).

C27 contributes to the Zn(2+) binding site. The 'HIGH' region signature appears at P29–H39. Residues D153 to K173 are disordered. Residues C208, H237, and E241 each coordinate Zn(2+). A 'KMSKS' region motif is present at residues K269–S273. K272 lines the ATP pocket.

It belongs to the class-I aminoacyl-tRNA synthetase family. In terms of assembly, monomer. Zn(2+) serves as cofactor.

Its subcellular location is the cytoplasm. The catalysed reaction is tRNA(Cys) + L-cysteine + ATP = L-cysteinyl-tRNA(Cys) + AMP + diphosphate. The protein is Cysteine--tRNA ligase of Sulfurovum sp. (strain NBC37-1).